The sequence spans 362 residues: Protein RecA (362 aa).

Residue 77 to 84 (GPESSGKT) coordinates ATP.

Belongs to the RecA family.

Its subcellular location is the cytoplasm. Its function is as follows. Can catalyze the hydrolysis of ATP in the presence of single-stranded DNA, the ATP-dependent uptake of single-stranded DNA by duplex DNA, and the ATP-dependent hybridization of homologous single-stranded DNAs. It interacts with LexA causing its activation and leading to its autocatalytic cleavage. In Rhizobium etli (strain ATCC 51251 / DSM 11541 / JCM 21823 / NBRC 15573 / CFN 42), this protein is Protein RecA.